The sequence spans 283 residues: Nucleotide-binding protein Hore_15880 (283 aa).

Position 8 to 15 (8 to 15) interacts with ATP; that stretch reads GMSGAGKS. Position 57-60 (57-60) interacts with GTP; that stretch reads DIRG.

Belongs to the RapZ-like family.

Its function is as follows. Displays ATPase and GTPase activities. This Halothermothrix orenii (strain H 168 / OCM 544 / DSM 9562) protein is Nucleotide-binding protein Hore_15880.